The sequence spans 272 residues: Phosphatidylglycerol--prolipoprotein diacylglyceryl transferase (272 aa).

3 helical membrane-spanning segments follow: residues 19 to 39 (ISIR…YFLV), 58 to 78 (LNTV…VVFY), and 94 to 114 (WHGG…GLIF). Arg-141 provides a ligand contact to a 1,2-diacyl-sn-glycero-3-phospho-(1'-sn-glycerol). The next 2 helical transmembrane spans lie at 207–227 (GTIL…IENF) and 234–254 (LGFI…MILC).

This sequence belongs to the Lgt family.

It localises to the cell inner membrane. It catalyses the reaction L-cysteinyl-[prolipoprotein] + a 1,2-diacyl-sn-glycero-3-phospho-(1'-sn-glycerol) = an S-1,2-diacyl-sn-glyceryl-L-cysteinyl-[prolipoprotein] + sn-glycerol 1-phosphate + H(+). It participates in protein modification; lipoprotein biosynthesis (diacylglyceryl transfer). Its function is as follows. Catalyzes the transfer of the diacylglyceryl group from phosphatidylglycerol to the sulfhydryl group of the N-terminal cysteine of a prolipoprotein, the first step in the formation of mature lipoproteins. The protein is Phosphatidylglycerol--prolipoprotein diacylglyceryl transferase of Desulfotalea psychrophila (strain LSv54 / DSM 12343).